The primary structure comprises 211 residues: MEEKKRELIRNLIAEGYIKRKEVAEAMMKVPRELFVPEELRHMAYEDTPLPIGAGQTISAPHMVAYMVEAAELRRGDKVLEVGTGSGYHAAVMAELVGPEGHVYTIERIPELAERARERLKALGYNNVTVLVGDGSKGYPPAAPYDKIIVTAAAKRVPEALLKQLKVGGIMVIPVEEEPGYQVLYKIIKTPEGYVIKKLLPVAFVPLIEEE.

Ser-59 is a catalytic residue.

Belongs to the methyltransferase superfamily. L-isoaspartyl/D-aspartyl protein methyltransferase family.

The protein localises to the cytoplasm. It catalyses the reaction [protein]-L-isoaspartate + S-adenosyl-L-methionine = [protein]-L-isoaspartate alpha-methyl ester + S-adenosyl-L-homocysteine. In terms of biological role, catalyzes the methyl esterification of L-isoaspartyl residues in peptides and proteins that result from spontaneous decomposition of normal L-aspartyl and L-asparaginyl residues. It plays a role in the repair and/or degradation of damaged proteins. This chain is Protein-L-isoaspartate O-methyltransferase, found in Ignicoccus hospitalis (strain KIN4/I / DSM 18386 / JCM 14125).